The sequence spans 534 residues: Prolyl 4-hydroxylase subunit alpha-2 (534 aa).

Positions 1–21 (MKPWLCLVFFTSAFLIWHAEA) are cleaved as a signal peptide. Residue N115 is glycosylated (N-linked (GlcNAc...) asparagine). The stretch at 207-240 (VEILDYLSYAVFQFGDLHRAMELTRRLISLDSTH) is one TPR repeat. The N-linked (GlcNAc...) asparagine glycan is linked to N263. Positions 413–519 (TAELLQVANY…KWVSNKWFHE (107 aa)) constitute a Fe2OG dioxygenase domain. Residues H431, D433, and H500 each coordinate Fe cation. K510 serves as a coordination point for 2-oxoglutarate.

The protein belongs to the P4HA family. Heterotetramer of two alpha-2 chains and two beta chains (the beta chain is the multi-functional PDI). Fe(2+) serves as cofactor. Requires L-ascorbate as cofactor.

It localises to the endoplasmic reticulum lumen. The enzyme catalyses L-prolyl-[collagen] + 2-oxoglutarate + O2 = trans-4-hydroxy-L-prolyl-[collagen] + succinate + CO2. Functionally, catalyzes the post-translational formation of 4-hydroxyproline in -Xaa-Pro-Gly- sequences in collagens and other proteins. The polypeptide is Prolyl 4-hydroxylase subunit alpha-2 (P4HA2) (Gallus gallus (Chicken)).